The sequence spans 118 residues: Putative membrane protein insertion efficiency factor (118 aa).

It belongs to the UPF0161 family.

It localises to the cell inner membrane. Could be involved in insertion of integral membrane proteins into the membrane. This chain is Putative membrane protein insertion efficiency factor, found in Helicobacter pylori (strain HPAG1).